The sequence spans 299 residues: Ethylmalonyl-CoA decarboxylase (299 aa).

At lysine 209 the chain carries N6-acetyllysine; alternate. Lysine 209 carries the N6-succinyllysine; alternate modification. Lysine 293 is modified (N6-succinyllysine).

Belongs to the enoyl-CoA hydratase/isomerase family.

It is found in the cytoplasm. It localises to the cytosol. The enzyme catalyses (2S)-ethylmalonyl-CoA + H(+) = butanoyl-CoA + CO2. It catalyses the reaction (S)-methylmalonyl-CoA + H(+) = propanoyl-CoA + CO2. The catalysed reaction is (2R)-ethylmalonyl-CoA + H(+) = butanoyl-CoA + CO2. Functionally, decarboxylates ethylmalonyl-CoA, a potentially toxic metabolite, to form butyryl-CoA, suggesting it might be involved in metabolite proofreading. Acts preferentially on (S)-ethylmalonyl-CoA but also has some activity on the (R)-isomer. Also has methylmalonyl-CoA decarboxylase activity at lower level. This Rattus norvegicus (Rat) protein is Ethylmalonyl-CoA decarboxylase (Echdc1).